We begin with the raw amino-acid sequence, 531 residues long: Glucose-6-phosphate exchanger SLC37A1 (531 aa).

The chain crosses the membrane as a helical span at residues 18–38 (QWYRAFIFMLTFLLYASFHLS). Positions 53–72 (CTAGDGPESPFSDPSSSTRH) are disordered. Helical transmembrane passes span 100 to 120 (GALD…SGII), 129 to 149 (YLTF…LGYF), 157 to 177 (FYVV…PSVV), 192 to 214 (IMGI…AGYW), 222 to 242 (SFIV…LFLI), 332 to 352 (LCLL…PLYI), 364 to 384 (GELS…AGVI), 392 to 412 (ASTC…FSSV), 419 to 439 (ATIA…ALIT), 464 to 484 (AIID…AGLI), and 488 to 508 (GWSN…LFLV).

The protein belongs to the major facilitator superfamily. Organophosphate:Pi antiporter (OPA) (TC 2.A.1.4) family.

The protein localises to the endoplasmic reticulum membrane. The catalysed reaction is D-glucose 6-phosphate(in) + phosphate(out) = D-glucose 6-phosphate(out) + phosphate(in). Its activity is regulated as follows. Inhibited by vanadate but not by chlorogenic acid. Its function is as follows. Inorganic phosphate and glucose-6-phosphate antiporter. May transport cytoplasmic glucose-6-phosphate into the lumen of the endoplasmic reticulum and translocate inorganic phosphate into the opposite direction. Independent of a lumenal glucose-6-phosphatase. May not play a role in homeostatic regulation of blood glucose levels. The protein is Glucose-6-phosphate exchanger SLC37A1 of Mus musculus (Mouse).